The primary structure comprises 2498 residues: Nuclear receptor corepressor 1 (2498 aa).

Disordered stretches follow at residues 1–38 (MSSSGYPPNQGAFSTEQGRYSSHPVQYTFPSSRHQQEY), 54–84 (IQQQQLRRRPSLLSEFHPVSDRPQDRRSGYD), 134–169 (SEVKKEQGLSSKHESSSSPLSGQPGDDQDASPSKLS), and 198–223 (QQQLEEEAAKPPEPEKPVSPPPVEQK). Composition is skewed to basic and acidic residues over residues 71–82 (PVSDRPQDRRSG), 134–148 (SEVKKEQGLSSKHES), and 204–213 (EAAKPPEPEK). The interaction with tbl1xr1-A stretch occupies residues 154-304 (SGQPGDDQDA…REQNICQRYD (151 aa)). The stretch at 168 to 208 (LSKEELIQSMDRVDREIAKVEQQILKLKKKQQQLEEEAAKP) forms a coiled coil. An SANT 1 domain is found at 427-478 (QFMNVWTDHEKEIFKEKFVRHPKNFGLIASYLERKNVSDCVLYYYLTKKNEN). Over residues 483 to 493 (VRRNYPKRRGR) the composition is skewed to basic residues. Disordered stretches follow at residues 483-649 (VRRN…GSKS), 668-912 (NLLQ…FGSR), 1075-1122 (SLSD…GTPG), 1417-1436 (DLVSQESRKTPESSRQIMEG), 1470-1583 (SWGV…QRES), 1737-1851 (PGTQ…AQES), and 1916-1990 (PQME…TAHT). Composition is skewed to basic and acidic residues over residues 502–525 (SQEEKEIEKVEEEKADRNDKKEDE) and 535–548 (KEELREGAKDKIDA). Residues 502–552 (SQEEKEIEKVEEEKADRNDKKEDERREEEEKEEKEELREGAKDKIDAVAED) are a coiled coil. A compositionally biased stretch (low complexity) spans 582–611 (ASEAAAANAVTTATTAPVTTTSTATTVAPV). Residues 612 to 627 (PVAPPPEEPTPPPPPQ) show a composition bias toward pro residues. Residues 628 to 665 (EQSLVDHGRNWGAIAKMVGSKSESQCKNFYFNYKRRHN) enclose the SANT 2 domain. Residues 689–699 (QCDSIASTVSA) are compositionally biased toward polar residues. The segment covering 700–719 (QEDDENEASNEEENPEDSEG) has biased composition (acidic residues). 2 stretches are compositionally biased toward low complexity: residues 727-738 (ESAPSPSPAEAA) and 761-774 (DAASKPASDSSPSP). Basic and acidic residues predominate over residues 854–863 (MERLMDRAEA). 2 stretches are compositionally biased toward polar residues: residues 872-891 (QNISQARQESQPDNDSSATC) and 1102-1122 (ATSSDKPSFITGGSISQGTPG). Over residues 1484 to 1501 (KMGERSKHEDTKSSDAIR) the composition is skewed to basic and acidic residues. A compositionally biased stretch (polar residues) spans 1505 to 1516 (TSVVSSGPSVLR). Over residues 1545-1558 (PSPMSRSSPMARSA) the composition is skewed to low complexity. The stretch at 1765-1804 (VSAERERERERERERDREREKEQRERESDRERERDRLAHA) forms a coiled coil. A compositionally biased stretch (basic and acidic residues) spans 1767 to 1802 (AERERERERERERDREREKEQRERESDRERERDRLA). Composition is skewed to low complexity over residues 1803-1813 (HAAAAAAAASA) and 1820-1835 (RPVSEQPSRPSSRPSS). The span at 1842-1851 (PSPSVRAQES) shows a compositional bias: polar residues. Basic and acidic residues predominate over residues 1921-1942 (AKPKESKNDSARSEENLSRRNA). Over residues 1958–1980 (SPYTSSSFSSSKSQSQPSSAVYS) the composition is skewed to low complexity. The CORNR box 1 signature appears at 2012–2016 (IDVII). The interval 2022–2109 (SDKDGRERNS…SPPQQTIPGH (88 aa)) is disordered. Positions 2031 to 2040 (SQSSDASSSH) are enriched in low complexity. Residues 2043–2052 (HRYEAPRETI) are compositionally biased toward basic and acidic residues. The span at 2093–2106 (RYRQQQESPPQQTI) shows a compositional bias: polar residues. Residues 2123–2127 (ICHII) carry the CORNR box 2 motif. Positions 2136-2145 (PVNQPLQQPP) are enriched in low complexity. The segment at 2136–2222 (PVNQPLQQPP…PISPPQAPML (87 aa)) is disordered. Residues 2146–2175 (ASTFQSTNPTSTAVRTKASSRFSPESQVQP) show a composition bias toward polar residues. The segment covering 2190–2209 (IPDKPRGRPGKSPDRGHISE) has biased composition (basic and acidic residues). A CORNR box 3 motif is present at residues 2326–2330 (LEDII). Disordered regions lie at residues 2344–2446 (DHGV…YNPL) and 2464–2498 (TSMTQTSAHQQSRIWEREPAPLLSEQYETLSDSDE). Residues 2353 to 2362 (QGNQSGTPNS) are compositionally biased toward polar residues. Positions 2380–2394 (HKQKLISKYGSRKTK) are enriched in basic residues. 2 stretches are compositionally biased toward polar residues: residues 2464 to 2476 (TSMTQTSAHQQSR) and 2489 to 2498 (QYETLSDSDE).

Belongs to the N-CoR nuclear receptor corepressors family. In terms of assembly, forms a large corepressor complex that contains sin3a/b, histone deacetylases hdac1 and hdac2, rbbp4 and possibly rbbp7. Interacts with the thyroid receptor (TR, composed of rxra and thrb) and the retinoid acid receptor (RAR, composed of rxra and rara) in the absence of ligand. Interacts with tbl1xr1-A and possibly tbl1xr1-B. Interacts with zbtb33/kaiso.

It localises to the nucleus. Its function is as follows. Mediates transcriptional repression by certain nuclear receptors. Participates in complexes which promote histone deacetylation and the formation of repressive chromatin structures which may impede access by the basal transcription machinery. In association with hdac3, may play a role in the regulation of the circadian clock. This is Nuclear receptor corepressor 1 (ncor1) from Xenopus laevis (African clawed frog).